Here is a 410-residue protein sequence, read N- to C-terminus: E3 ubiquitin-protein ligase PRT1 (410 aa).

2 RING-type zinc fingers span residues 26-66 (CCVC…PICR) and 192-232 (CSAC…QECN). Residues 306–370 (HFGAGCDSCG…RLELARSPQV (65 aa)) form a ZZ-type zinc finger. 8 residues coordinate Zn(2+): cysteine 311, cysteine 314, cysteine 326, cysteine 329, cysteine 338, cysteine 341, histidine 356, and histidine 360. The segment at 385 to 410 (ISNEGMDTDEGEEGPPGSSNESSSTE) is disordered. The span at 399-410 (PPGSSNESSSTE) shows a compositional bias: low complexity.

It localises to the cytoplasm. The enzyme catalyses S-ubiquitinyl-[E2 ubiquitin-conjugating enzyme]-L-cysteine + [acceptor protein]-L-lysine = [E2 ubiquitin-conjugating enzyme]-L-cysteine + N(6)-ubiquitinyl-[acceptor protein]-L-lysine.. It functions in the pathway protein modification; protein ubiquitination. E3 ubiquitin-protein ligase that mediates ubiquitination and subsequent proteasomal degradation of target proteins. Functions in the N-end rule pathway of protein degradation, where it specifically recognizes and ubiquitinates proteins with a N-terminal bulky aromatic amino acid (Phe). Does not act on aliphatic hydrophobic and basic N-terminal residues (Arg or Leu) containing proteins. This is E3 ubiquitin-protein ligase PRT1 (PRT1) from Arabidopsis thaliana (Mouse-ear cress).